A 189-amino-acid polypeptide reads, in one-letter code: Adenylate kinase homolog MTH_1663 (189 aa).

12 to 20 (GVPGTGKTT) is a binding site for ATP.

Belongs to the archaeal adenylate kinase family.

The chain is Adenylate kinase homolog MTH_1663 from Methanothermobacter thermautotrophicus (strain ATCC 29096 / DSM 1053 / JCM 10044 / NBRC 100330 / Delta H) (Methanobacterium thermoautotrophicum).